We begin with the raw amino-acid sequence, 547 residues long: Undecaprenyl phosphate-alpha-4-amino-4-deoxy-L-arabinose arabinosyl transferase (547 aa).

Helical transmembrane passes span 83–103 (FASA…ALQL), 111–131 (FLAS…TYSV), 174–194 (FLTK…PYVI), 205–225 (FGPL…IAVH), 253–273 (APFW…LGLL), 286–306 (ISPE…FFSI), 311–331 (LLTY…ANAV), 346–366 (AWLN…LAFS), 378–398 (GALA…FIQL), and 408–428 (SALC…QSLI).

It belongs to the glycosyltransferase 83 family.

It localises to the cell inner membrane. The enzyme catalyses 4-amino-4-deoxy-alpha-L-arabinopyranosyl di-trans,octa-cis-undecaprenyl phosphate + lipid IVA = lipid IIA + di-trans,octa-cis-undecaprenyl phosphate.. It functions in the pathway lipopolysaccharide metabolism; 4-amino-4-deoxy-beta-L-arabinose-lipid A biosynthesis. In terms of biological role, catalyzes the transfer of the L-Ara4N moiety of the glycolipid undecaprenyl phosphate-alpha-L-Ara4N to lipid A. The modified arabinose is attached to lipid A and is required for resistance to polymyxin and cationic antimicrobial peptides. This chain is Undecaprenyl phosphate-alpha-4-amino-4-deoxy-L-arabinose arabinosyl transferase, found in Aeromonas hydrophila subsp. hydrophila (strain ATCC 7966 / DSM 30187 / BCRC 13018 / CCUG 14551 / JCM 1027 / KCTC 2358 / NCIMB 9240 / NCTC 8049).